A 466-amino-acid polypeptide reads, in one-letter code: Keratin, type II cytoskeletal 7 (466 aa).

The residue at position 2 (serine 2) is an N-acetylserine. Residues serine 2 and serine 7 each carry the phosphoserine modification. Residues 2-91 are head; the sequence is SLHFGSQVFS…DPSIQQVRQE (90 aa). The O-linked (GlcNAc) serine glycan is linked to serine 12. Arginine 20 bears the Dimethylated arginine; alternate mark. Arginine 20 bears the Omega-N-methylarginine; alternate mark. A phosphoserine mark is found at serine 54, serine 72, and serine 84. A coil 1A region spans residues 91 to 127; the sequence is EEREQIKTLNNKFASFIDKVRFLEQQNKLLETKWALL. In terms of domain architecture, IF rod spans 92–404; sequence EREQIKTLNN…KLLEGEESRL (313 aa). Threonine 98 carries the post-translational modification Phosphothreonine. The linker 1 stretch occupies residues 128–145; sequence QEQKSAKSNRLPGIFEAQ. Residue lysine 131 forms a Glycyl lysine isopeptide (Lys-Gly) (interchain with G-Cter in SUMO2) linkage. Residues 146–237 are coil 1B; that stretch reads IAGLRKQLEA…TLYEQELKEL (92 aa). Residue lysine 180 is modified to N6-acetyllysine. The interval 238-261 is linker 12; that stretch reads QSEVSDTSVVLSMDNNRSLDLDSI. Position 255 is a phosphoserine (serine 255). Residues 262–400 form a coil 2 region; sequence IAEVKAQYEE…ATYRKLLEGE (139 aa). Residues lysine 266 and lysine 287 each participate in a glycyl lysine isopeptide (Lys-Gly) (interchain with G-Cter in SUMO2) cross-link. A Phosphothreonine modification is found at threonine 290. Residues lysine 297 and lysine 332 each participate in a glycyl lysine isopeptide (Lys-Gly) (interchain with G-Cter in SUMO2) cross-link. Residues 401–466 are tail; the sequence is ESRLTGDGVG…TSATSRSPRK (66 aa).

Belongs to the intermediate filament family. In terms of assembly, heterotetramer of two type I and two type II keratins. Interacts with eukaryotic translation initiator factor 3 (eIF3) subunit EIF3S10. Interacts with GPER1. Post-translationally, arg-20 is dimethylated, probably to asymmetric dimethylarginine.

Blocks interferon-dependent interphase and stimulates DNA synthesis in cells. The sequence is that of Keratin, type II cytoskeletal 7 from Bos taurus (Bovine).